The following is a 128-amino-acid chain: 14 kDa zinc-binding protein (128 aa).

An HIT domain is found at 18 to 128 (IFDKIIKKEI…GGRQMNWPPG (111 aa)). A Histidine triad motif motif is present at residues 112–116 (HIHVH).

As to quaternary structure, homodimer.

The polypeptide is 14 kDa zinc-binding protein (ZBP14) (Zea mays (Maize)).